The chain runs to 624 residues: UvrABC system protein C (624 aa).

Residues 25 to 104 form the GIY-YIG domain; it reads AEPGVYFMRD…IKQHQPHFNV (80 aa). A UVR domain is found at 214–249; the sequence is SELIDTLTPQMEAAAENLNFEQAARIRDQINGLKTL.

This sequence belongs to the UvrC family. Interacts with UvrB in an incision complex.

It localises to the cytoplasm. The UvrABC repair system catalyzes the recognition and processing of DNA lesions. UvrC both incises the 5' and 3' sides of the lesion. The N-terminal half is responsible for the 3' incision and the C-terminal half is responsible for the 5' incision. This chain is UvrABC system protein C, found in Cyanothece sp. (strain PCC 7425 / ATCC 29141).